The sequence spans 34 residues: Voltage sensor toxin 3 (34 aa).

3 disulfide bridges follow: C2–C17, C9–C22, and C16–C29.

Belongs to the neurotoxin 10 (Hwtx-1) family. 61 (VSTX3) subfamily. Expressed by the venom gland.

It is found in the secreted. Functionally, potent voltage-gated sodium channel blocker (IC(50)=190 nM and 210 nM on human and rat Nav1.3/SCN3A respectively, 430 nM on human Nav1.7/SCN9A, 770 nM and 290 nM on human and rat Nav1.8/SCN10A, respectively). Binds the voltage-sensor domain of the potassium channel KvAP (from Aeropyrum pernix) and weakly inhibits this channel. This chain is Voltage sensor toxin 3, found in Grammostola rosea (Chilean rose tarantula).